A 540-amino-acid polypeptide reads, in one-letter code: Hydroxylamine reductase (540 aa).

The [4Fe-4S] cluster site is built by C3, C6, C15, and C21. Hybrid [4Fe-2O-2S] cluster is bound by residues H236, E260, C304, C395, C423, C448, E483, and K485. The residue at position 395 (C395) is a Cysteine persulfide.

This sequence belongs to the HCP family. The cofactor is [4Fe-4S] cluster. It depends on hybrid [4Fe-2O-2S] cluster as a cofactor.

It localises to the cytoplasm. The catalysed reaction is A + NH4(+) + H2O = hydroxylamine + AH2 + H(+). Its function is as follows. Catalyzes the reduction of hydroxylamine to form NH(3) and H(2)O. In Methanosarcina mazei (strain ATCC BAA-159 / DSM 3647 / Goe1 / Go1 / JCM 11833 / OCM 88) (Methanosarcina frisia), this protein is Hydroxylamine reductase.